Here is a 134-residue protein sequence, read N- to C-terminus: Two-component response regulator ORR5 (134 aa).

One can recognise a Response regulatory domain in the interval 16 to 133 (HVLAVDDSSV…DVSRLCSRVL (118 aa)). D66 carries the post-translational modification 4-aspartylphosphate.

This sequence belongs to the ARR family. Type-A subfamily. In terms of processing, two-component system major event consists of a His-to-Asp phosphorelay between a sensor histidine kinase (HK) and a response regulator (RR). In plants, the His-to-Asp phosphorelay involves an additional intermediate named Histidine-containing phosphotransfer protein (HPt). This multistep phosphorelay consists of a His-Asp-His-Asp sequential transfer of a phosphate group between first a His and an Asp of the HK protein, followed by the transfer to a conserved His of the HPt protein and finally the transfer to an Asp in the receiver domain of the RR protein. In terms of tissue distribution, expressed in mature leaves and shoots, and at low levels in roots and flowers.

Functions as a response regulator involved in His-to-Asp phosphorelay signal transduction system. Phosphorylation of the Asp residue in the receiver domain activates the ability of the protein to promote the transcription of target genes. Type-A response regulators seem to act as negative regulators of the cytokinin signaling. The chain is Two-component response regulator ORR5 from Oryza sativa subsp. indica (Rice).